The following is a 160-amino-acid chain: Nitrate reductase [NADH] (160 aa).

T37 serves as a coordination point for FAD.

The protein belongs to the nitrate reductase family. As to quaternary structure, homodimer. FAD is required as a cofactor. Heme serves as cofactor. It depends on Mo-molybdopterin as a cofactor.

It catalyses the reaction nitrite + NAD(+) + H2O = nitrate + NADH + H(+). Its function is as follows. Nitrate reductase is a key enzyme involved in the first step of nitrate assimilation in plants, fungi and bacteria. The protein is Nitrate reductase [NADH] (NIA) of Lotus tetragonolobus (Winged pea).